The following is a 92-amino-acid chain: Small ribosomal subunit protein bS20 (92 aa).

Positions 1 to 22 (MANSPQSKKRARQAEARAAVNK) are disordered.

The protein belongs to the bacterial ribosomal protein bS20 family.

Functionally, binds directly to 16S ribosomal RNA. This chain is Small ribosomal subunit protein bS20, found in Cereibacter sphaeroides (strain ATCC 17029 / ATH 2.4.9) (Rhodobacter sphaeroides).